We begin with the raw amino-acid sequence, 249 residues long: Undecaprenyl-diphosphatase (249 aa).

8 helical membrane passes run 11–31, 35–55, 80–100, 101–121, 135–155, 180–200, 202–222, and 226–246; these read GLTEFLPISSSGHLAIFTAIF, PDVGYFAFLHLATFLAVLIFV, LVLSTIPAVFVGLFFGDFIES, VFSSTYLIGIFLSITGILMLL, IPYFDALIVGVFQAFSVLPGI, FLMSLPVTFGAGILELHNVAF, TEQIFGFVISFLTGLLGLYLV, and VIGGKLKIFGYYCFLASFFVL.

The protein belongs to the UppP family.

It localises to the cell membrane. The enzyme catalyses di-trans,octa-cis-undecaprenyl diphosphate + H2O = di-trans,octa-cis-undecaprenyl phosphate + phosphate + H(+). Catalyzes the dephosphorylation of undecaprenyl diphosphate (UPP). This is Undecaprenyl-diphosphatase from Methanococcus maripaludis (strain C7 / ATCC BAA-1331).